Consider the following 87-residue polypeptide: Small ribosomal subunit protein uS15 (87 aa).

It belongs to the universal ribosomal protein uS15 family. Part of the 30S ribosomal subunit. Forms a bridge to the 50S subunit in the 70S ribosome, contacting the 23S rRNA.

Its function is as follows. One of the primary rRNA binding proteins, it binds directly to 16S rRNA where it helps nucleate assembly of the platform of the 30S subunit by binding and bridging several RNA helices of the 16S rRNA. Forms an intersubunit bridge (bridge B4) with the 23S rRNA of the 50S subunit in the ribosome. This is Small ribosomal subunit protein uS15 from Alkaliphilus oremlandii (strain OhILAs) (Clostridium oremlandii (strain OhILAs)).